The sequence spans 166 residues: Small heat shock protein OV25-2 (166 aa).

The sHSP domain maps to 38-149 (LNECNIGNSL…ASRNIPIRAS (112 aa)). Positions 140–166 (ASRNIPIRASPKEPEANQKSAINDAKQ) are disordered.

Belongs to the small heat shock protein (HSP20) family.

The chain is Small heat shock protein OV25-2 (OV25-2) from Onchocerca volvulus.